The chain runs to 371 residues: Chorismate synthase (371 aa).

Residues arginine 48 and arginine 54 each contribute to the NADP(+) site. FMN contacts are provided by residues 131 to 133 (RSS), 245 to 246 (NA), glycine 290, 305 to 309 (KPTSS), and arginine 331.

The protein belongs to the chorismate synthase family. Homotetramer. Requires FMNH2 as cofactor.

It catalyses the reaction 5-O-(1-carboxyvinyl)-3-phosphoshikimate = chorismate + phosphate. It functions in the pathway metabolic intermediate biosynthesis; chorismate biosynthesis; chorismate from D-erythrose 4-phosphate and phosphoenolpyruvate: step 7/7. Functionally, catalyzes the anti-1,4-elimination of the C-3 phosphate and the C-6 proR hydrogen from 5-enolpyruvylshikimate-3-phosphate (EPSP) to yield chorismate, which is the branch point compound that serves as the starting substrate for the three terminal pathways of aromatic amino acid biosynthesis. This reaction introduces a second double bond into the aromatic ring system. This chain is Chorismate synthase, found in Mesorhizobium japonicum (strain LMG 29417 / CECT 9101 / MAFF 303099) (Mesorhizobium loti (strain MAFF 303099)).